Here is a 299-residue protein sequence, read N- to C-terminus: N-carbamoylputrescine amidase (299 aa).

The CN hydrolase domain occupies 10 to 268 (VVVSSLQFAC…EAVLVAQFDL (259 aa)). The Proton acceptor role is filled by Glu49. Lys122 serves as the catalytic Proton donor. Cys159 (nucleophile) is an active-site residue.

It belongs to the carbon-nitrogen hydrolase superfamily. In terms of assembly, homooctamer (isoform 2). Expressed in roots, stems, leaves and flowers.

The catalysed reaction is N-carbamoylputrescine + H2O + 2 H(+) = putrescine + NH4(+) + CO2. It participates in amine and polyamine biosynthesis; putrescine biosynthesis via agmatine pathway; putrescine from N-carbamoylputrescine (amidase route): step 1/1. In terms of biological role, involved in polyamine biosynthesis. Catalyzes the hydrolysis of N-carbamoylputrescine to produce putrescine and ammonia. The polypeptide is N-carbamoylputrescine amidase (Arabidopsis thaliana (Mouse-ear cress)).